A 441-amino-acid polypeptide reads, in one-letter code: Arginine biosynthesis bifunctional protein ArgJ, mitochondrial (441 aa).

Residues Thr177, Lys204, Thr215, Glu301, Asn436, and Ser441 each coordinate substrate. Thr215 functions as the Nucleophile in the catalytic mechanism.

The protein belongs to the ArgJ family. In terms of assembly, heterodimer of an alpha and a beta chain. The alpha and beta chains are autoproteolytically processed from a single precursor protein within the mitochondrion.

The protein localises to the mitochondrion matrix. The catalysed reaction is N(2)-acetyl-L-ornithine + L-glutamate = N-acetyl-L-glutamate + L-ornithine. It catalyses the reaction L-glutamate + acetyl-CoA = N-acetyl-L-glutamate + CoA + H(+). The protein operates within amino-acid biosynthesis; L-arginine biosynthesis; L-ornithine and N-acetyl-L-glutamate from L-glutamate and N(2)-acetyl-L-ornithine (cyclic): step 1/1. It functions in the pathway amino-acid biosynthesis; L-arginine biosynthesis; N(2)-acetyl-L-ornithine from L-glutamate: step 1/4. Functionally, catalyzes two activities which are involved in the cyclic version of arginine biosynthesis: the synthesis of acetylglutamate from glutamate and acetyl-CoA, and of ornithine by transacetylation between acetylornithine and glutamate. In Kluyveromyces lactis (strain ATCC 8585 / CBS 2359 / DSM 70799 / NBRC 1267 / NRRL Y-1140 / WM37) (Yeast), this protein is Arginine biosynthesis bifunctional protein ArgJ, mitochondrial.